Here is a 125-residue protein sequence, read N- to C-terminus: Protein ApaG (125 aa).

Positions 3-125 constitute an ApaG domain; the sequence is TAVTEGIEVT…FPLVVPGTLN (123 aa).

The sequence is that of Protein ApaG from Anaeromyxobacter sp. (strain K).